We begin with the raw amino-acid sequence, 557 residues long: Portal protein (557 aa).

It belongs to the herpesviridae portal protein family. Homododecamerizes. Interacts with terminase subunits TRM1 and TRM3.

The protein resides in the virion. It localises to the host nucleus. In terms of biological role, forms a portal in the viral capsid through which viral DNA is translocated during DNA packaging. Assembles as a dodecamer at a single fivefold axe of the T=16 icosahedric capsid. Binds to the molecular motor that translocates the viral DNA, termed terminase. The protein is Portal protein (43) of Connochaetes taurinus (Blue wildebeest).